Here is a 179-residue protein sequence, read N- to C-terminus: Large ribosomal subunit protein uL6 (179 aa).

It belongs to the universal ribosomal protein uL6 family. Part of the 50S ribosomal subunit.

Its function is as follows. This protein binds to the 23S rRNA, and is important in its secondary structure. It is located near the subunit interface in the base of the L7/L12 stalk, and near the tRNA binding site of the peptidyltransferase center. The sequence is that of Large ribosomal subunit protein uL6 from Alkaliphilus metalliredigens (strain QYMF).